A 169-amino-acid chain; its full sequence is Small ribosomal subunit protein bS18c (169 aa).

The disordered stretch occupies residues 1 to 61; that stretch reads MYTSKQPFLK…RRPRIGPGDR (61 aa). The span at 27-55 shows a compositional bias: basic residues; that stretch reads QTFRKSKQTFRKFKQPFRKSKQPFRRRPR.

Belongs to the bacterial ribosomal protein bS18 family. In terms of assembly, part of the 30S ribosomal subunit.

The protein localises to the plastid. Its subcellular location is the chloroplast. This chain is Small ribosomal subunit protein bS18c, found in Agrostis stolonifera (Creeping bentgrass).